The following is a 99-amino-acid chain: Virion membrane protein OPG135 (99 aa).

The signal sequence occupies residues 1–22; the sequence is MSCYTAILKSVGGLALFQVANG. Over 23–45 the chain is Intravirion; that stretch reads AIDLCRHFFMYFCEQKLRPNSFW. Residues 46–66 traverse the membrane as a helical segment; it reads FVVVRAIASMIMYLVLGIALL. Over 67–83 the chain is Virion surface; that stretch reads YISEQDDKKNTNNDGSN. Residues 73-89 are compositionally biased toward basic and acidic residues; that stretch reads DKKNTNNDGSNNDKRNE. The disordered stretch occupies residues 73-99; that stretch reads DKKNTNNDGSNNDKRNESSINSNSSPK. An N-linked (GlcNAc...) asparagine; by host glycan is attached at N88. The span at 90–99 shows a compositional bias: polar residues; sequence SSINSNSSPK.

The protein belongs to the oerthopoxvirus OPG135 family.

It localises to the virion membrane. It is found in the host cytoplasm. Functionally, envelope protein. Required for an early step in virion morphogenesis. The polypeptide is Virion membrane protein OPG135 (OPG135) (Homo sapiens (Human)).